The sequence spans 339 residues: DNA-directed RNA polymerase subunit alpha (339 aa).

The tract at residues 1–233 (MVREEVAGST…DLFLPFLHAE (233 aa)) is alpha N-terminal domain (alpha-NTD). The segment at 266 to 339 (GIPLNCIFID…IDLLKNKLSF (74 aa)) is alpha C-terminal domain (alpha-CTD).

The protein belongs to the RNA polymerase alpha chain family. In terms of assembly, in plastids the minimal PEP RNA polymerase catalytic core is composed of four subunits: alpha, beta, beta', and beta''. When a (nuclear-encoded) sigma factor is associated with the core the holoenzyme is formed, which can initiate transcription.

The protein localises to the plastid. It localises to the chloroplast. It carries out the reaction RNA(n) + a ribonucleoside 5'-triphosphate = RNA(n+1) + diphosphate. DNA-dependent RNA polymerase catalyzes the transcription of DNA into RNA using the four ribonucleoside triphosphates as substrates. The polypeptide is DNA-directed RNA polymerase subunit alpha (Hordeum bulbosum (Bulbous barley)).